The primary structure comprises 432 residues: Trigger factor (432 aa).

Positions 165–250 (GDFAKIDFEG…LKEIQVKAPQ (86 aa)) constitute a PPIase FKBP-type domain.

It belongs to the FKBP-type PPIase family. Tig subfamily.

Its subcellular location is the cytoplasm. It carries out the reaction [protein]-peptidylproline (omega=180) = [protein]-peptidylproline (omega=0). Functionally, involved in protein export. Acts as a chaperone by maintaining the newly synthesized protein in an open conformation. Functions as a peptidyl-prolyl cis-trans isomerase. The protein is Trigger factor of Wolinella succinogenes (strain ATCC 29543 / DSM 1740 / CCUG 13145 / JCM 31913 / LMG 7466 / NCTC 11488 / FDC 602W) (Vibrio succinogenes).